The following is a 186-amino-acid chain: Ribosome-recycling factor (186 aa).

This sequence belongs to the RRF family.

The protein resides in the cytoplasm. Functionally, responsible for the release of ribosomes from messenger RNA at the termination of protein biosynthesis. May increase the efficiency of translation by recycling ribosomes from one round of translation to another. In Paraburkholderia phymatum (strain DSM 17167 / CIP 108236 / LMG 21445 / STM815) (Burkholderia phymatum), this protein is Ribosome-recycling factor.